Consider the following 517-residue polypeptide: Glycerol kinase 5 (517 aa).

ATP contacts are provided by S23 and T24. Positions 93, 270, and 271 each coordinate glycerol. ATP contacts are provided by T292, G335, and G432.

This sequence belongs to the FGGY kinase family.

The protein localises to the cytoplasm. It catalyses the reaction glycerol + ATP = sn-glycerol 3-phosphate + ADP + H(+). Its pathway is polyol metabolism; glycerol degradation via glycerol kinase pathway; sn-glycerol 3-phosphate from glycerol: step 1/1. Its function is as follows. Skin-specific kinase that plays a key role in glycerol metabolism, catalyzing its phosphorylation to produce sn-glycerol 3-phosphate. Involved in skin-specific regulation of sterol regulatory element-binding protein (SREBP) processing and lipid biosynthesis. The chain is Glycerol kinase 5 (GK5) from Gallus gallus (Chicken).